Here is a 98-residue protein sequence, read N- to C-terminus: Small ribosomal subunit protein uS19 (98 aa).

Residues 74–98 (FAPTRNYRGHAGGKSEKGGSAPRKK) are disordered.

The protein belongs to the universal ribosomal protein uS19 family.

Functionally, protein S19 forms a complex with S13 that binds strongly to the 16S ribosomal RNA. The protein is Small ribosomal subunit protein uS19 of Chlorobium chlorochromatii (strain CaD3).